Reading from the N-terminus, the 977-residue chain is GAS2-like protein pickled eggs (977 aa).

Positions 20-159 (EAMREDLAEW…CLLEVARRGA (140 aa)) constitute a Calponin-homology (CH) domain. The disordered stretch occupies residues 218-245 (VETDLYDDSDDSETEDDGDQNPVLMYGP). Positions 221–236 (DLYDDSDDSETEDDGD) are enriched in acidic residues. A GAR domain is found at 252 to 324 (NDLKSLDEMV…HYLDKHDPCR (73 aa)). 5 disordered regions span residues 397-543 (PTLQ…SEIS), 557-624 (AQKR…VCDG), 666-685 (VANT…RSPL), 693-803 (IDNS…KGRS), and 910-977 (NLER…TELY). Polar residues-rich tracts occupy residues 399-428 (LQNG…NQQA) and 436-454 (ATGS…QLLG). Residues 502–527 (GGSGVGSAAGGVSSGSAGSGVAGEQG) are compositionally biased toward gly residues. Polar residues predominate over residues 577–589 (RLDQTSSDSQISP). Residues 601-620 (ILEEEDLNGQDREEDQEDYS) show a composition bias toward acidic residues. Composition is skewed to polar residues over residues 666-677 (VANTMGNPTPNL) and 731-741 (TRNSTGATTTP). Positions 928-953 (SSAASSCESNNSNAGAGSGAAAGSAS) are enriched in low complexity.

Belongs to the GAS2 family. As to expression, expressed in the ovary and the ring canals of the germline cells. In larvae, expressed in the notal region of the wing disk.

It is found in the cytoplasm. The protein localises to the cytoskeleton. Its subcellular location is the cell cortex. Essential for development and viability. Required for ovary development and oogenesis, and is essential for the development of the indirect flight muscles. May act as a negative regulator of the Notch signaling pathway in certain tissues, such as the muscle precursors and ovaries. May function as a linker protein between the actin and microtubule cytoskeletons. The protein is GAS2-like protein pickled eggs of Drosophila melanogaster (Fruit fly).